The sequence spans 293 residues: 3-methyl-2-oxobutanoate hydroxymethyltransferase (293 aa).

A disordered region spans residues 1 to 25 (MTDSPTAGTPYGTLPPASPLPQRRP). Residues aspartate 67 and aspartate 110 each coordinate Mg(2+). Residues 67–68 (DS), aspartate 110, and lysine 139 contribute to the 3-methyl-2-oxobutanoate site. Residue glutamate 141 participates in Mg(2+) binding. Catalysis depends on glutamate 208, which acts as the Proton acceptor.

The protein belongs to the PanB family. Homodecamer; pentamer of dimers. The cofactor is Mg(2+).

It localises to the cytoplasm. The enzyme catalyses 3-methyl-2-oxobutanoate + (6R)-5,10-methylene-5,6,7,8-tetrahydrofolate + H2O = 2-dehydropantoate + (6S)-5,6,7,8-tetrahydrofolate. The protein operates within cofactor biosynthesis; (R)-pantothenate biosynthesis; (R)-pantoate from 3-methyl-2-oxobutanoate: step 1/2. Functionally, catalyzes the reversible reaction in which hydroxymethyl group from 5,10-methylenetetrahydrofolate is transferred onto alpha-ketoisovalerate to form ketopantoate. The protein is 3-methyl-2-oxobutanoate hydroxymethyltransferase of Acidovorax sp. (strain JS42).